A 404-amino-acid polypeptide reads, in one-letter code: Phosphoglycerate kinase (404 aa).

Substrate contacts are provided by residues 21-23, arginine 38, 61-64, arginine 126, and arginine 159; these read DFN and HLGR. ATP contacts are provided by residues lysine 210, glutamate 333, and 360–363; that span reads GGDS.

The protein belongs to the phosphoglycerate kinase family. In terms of assembly, monomer.

The protein localises to the cytoplasm. It carries out the reaction (2R)-3-phosphoglycerate + ATP = (2R)-3-phospho-glyceroyl phosphate + ADP. Its pathway is carbohydrate degradation; glycolysis; pyruvate from D-glyceraldehyde 3-phosphate: step 2/5. This is Phosphoglycerate kinase from Acidobacterium capsulatum (strain ATCC 51196 / DSM 11244 / BCRC 80197 / JCM 7670 / NBRC 15755 / NCIMB 13165 / 161).